A 543-amino-acid polypeptide reads, in one-letter code: Cytochrome P450 monooxygenase 205 (543 aa).

The chain crosses the membrane as a helical span at residues 9–29 (LISLGVAALAVAVWKAIVMVI). N-linked (GlcNAc...) asparagine glycosylation is found at Asn-332 and Asn-434. A heme-binding site is contributed by Cys-479.

Belongs to the cytochrome P450 family. Requires heme as cofactor.

It is found in the membrane. The protein operates within secondary metabolite biosynthesis. Functionally, cytochrome P450 monooxygenase that is able to use carbazole and phenanthrene as substrates for oxidation. The chain is Cytochrome P450 monooxygenase 205 from Postia placenta (strain ATCC 44394 / Madison 698-R) (Brown rot fungus).